We begin with the raw amino-acid sequence, 148 residues long: Large ribosomal subunit protein bL9 (148 aa).

The protein belongs to the bacterial ribosomal protein bL9 family.

In terms of biological role, binds to the 23S rRNA. The protein is Large ribosomal subunit protein bL9 of Pseudomonas aeruginosa (strain LESB58).